A 296-amino-acid chain; its full sequence is Nucleotide-binding protein SSA_0810 (296 aa).

13–20 (GMSGAGKT) is an ATP binding site. 63–66 (DMRS) is a GTP binding site. Residues 277–296 (WPVNSSHRDKNRRKETVNRS) are disordered. Residues 282–296 (SHRDKNRRKETVNRS) show a composition bias toward basic and acidic residues.

It belongs to the RapZ-like family.

Its function is as follows. Displays ATPase and GTPase activities. The polypeptide is Nucleotide-binding protein SSA_0810 (Streptococcus sanguinis (strain SK36)).